The sequence spans 509 residues: Maturase K (509 aa).

Belongs to the intron maturase 2 family. MatK subfamily.

The protein resides in the plastid. Its subcellular location is the chloroplast. In terms of biological role, usually encoded in the trnK tRNA gene intron. Probably assists in splicing its own and other chloroplast group II introns. In Abies firma (Momi fir), this protein is Maturase K.